A 430-amino-acid chain; its full sequence is Glutamate-1-semialdehyde 2,1-aminomutase (430 aa).

Position 269 is an N6-(pyridoxal phosphate)lysine (Lys269).

It belongs to the class-III pyridoxal-phosphate-dependent aminotransferase family. HemL subfamily. In terms of assembly, homodimer. Requires pyridoxal 5'-phosphate as cofactor.

It is found in the cytoplasm. The enzyme catalyses (S)-4-amino-5-oxopentanoate = 5-aminolevulinate. It functions in the pathway porphyrin-containing compound metabolism; protoporphyrin-IX biosynthesis; 5-aminolevulinate from L-glutamyl-tRNA(Glu): step 2/2. The sequence is that of Glutamate-1-semialdehyde 2,1-aminomutase from Desulfitobacterium hafniense (strain DSM 10664 / DCB-2).